A 742-amino-acid chain; its full sequence is Alcohol dehydrogenase (quinone), dehydrogenase subunit (742 aa).

The N-terminal stretch at 1–35 (MTRPASAKRRSLLGILAAGTICAAALPYAAVPARA) is a signal peptide. A pyrroloquinoline quinone-binding site is contributed by Glu96. A disulfide bridge connects residues Cys142 and Cys143. Arg148 lines the pyrroloquinoline quinone pocket. Ca(2+) is bound at residue Glu216. Residue Thr278 coordinates pyrroloquinoline quinone. Residues Asn298 and Asp343 each coordinate Ca(2+). Asp343 functions as the Proton acceptor in the catalytic mechanism. Pyrroloquinoline quinone is bound by residues Lys370 and Ile584. The Cytochrome c domain occupies 636-715 (KVVDNGYFQY…AIRQYLIKRA (80 aa)). The heme c site is built by Cys649, Cys652, His653, and Met692. The span at 722-732 (EVDARKNDKNI) shows a compositional bias: basic and acidic residues. Residues 722-742 (EVDARKNDKNIPENPTLGINP) form a disordered region.

Belongs to the bacterial PQQ dehydrogenase family. The alcohol dehydrogenase multicomponent enzyme system is composed of a dehydrogenase subunit I (AdhA) and a cytochrome c subunit II (AdhB). Pyrroloquinoline quinone serves as cofactor. It depends on Ca(2+) as a cofactor. Heme c is required as a cofactor.

Its subcellular location is the cell membrane. It catalyses the reaction ethanol + a ubiquinone = a ubiquinol + acetaldehyde. Its function is as follows. Dehydrogenase component of the alcohol dehydrogenase multicomponent enzyme system which is involved in the production of acetic acid and in the ethanol oxidase respiratory chain. Quinohemoprotein alcohol dehydrogenase (ADH) catalyzes the oxidation of ethanol to acetaldehyde by transferring electrons to the ubiquinone embedded in the membrane phospholipids. The electrons transfer from ethanol to membranous ubiquinone occurs from pyrroloquinoline quinone (PQQ) to one heme c in subunit I (AdhA), and finally to two heme c in subunit II (AdhB). Besides ubiquinone reduction, ADH also has a ubiquinol (QH2) oxidation reaction which mediates electron transfer from ubiquinol to the non-energy generating bypass oxidase system. The electrons transfer occurs from ubiquinol (QH2) to the additional heme c within subunit II (AdhB). The chain is Alcohol dehydrogenase (quinone), dehydrogenase subunit from Acetobacter aceti.